The primary structure comprises 287 residues: HTH-type transcriptional regulator MurR (287 aa).

The region spanning 1–77 (MLYLAKMRNA…MALIEEHSVS (77 aa)) is the HTH rpiR-type domain. Residues 37 to 56 (SRNMAKQLEISQSSIVKFAQ) constitute a DNA-binding region (H-T-H motif). The SIS domain maps to 128–268 (VINLISKAPL…FVGMVQLNDV (141 aa)).

In terms of assembly, homotetramer.

It functions in the pathway amino-sugar metabolism; N-acetylmuramate degradation [regulation]. In terms of biological role, represses the expression of the murPQ operon involved in the uptake and degradation of N-acetylmuramic acid (MurNAc). Binds to two adjacent inverted repeats within the operator region. MurNAc 6-phosphate, the substrate of MurQ, is the specific inducer that weakens binding of MurR to the operator. The sequence is that of HTH-type transcriptional regulator MurR from Salmonella arizonae (strain ATCC BAA-731 / CDC346-86 / RSK2980).